A 577-amino-acid chain; its full sequence is Outer spore wall assembly protein SHE10 (577 aa).

Positions 1–23 (MGKLIKLITTLTVLVSLLQYCCE) are cleaved as a signal peptide. 2 coiled-coil regions span residues 379–416 (NETR…ENVE) and 513–561 (ILRS…EEDV). Basic and acidic residues predominate over residues 525–545 (RERKERERKEREKAAAEEFQR). Residues 525–577 (RERKERERKEREKAAAEEFQRQQELLLQQEEEDEEDVSYTSTSTITTTTTMTL) form a disordered region. Residues 562–577 (SYTSTSTITTTTTMTL) are compositionally biased toward low complexity.

This sequence belongs to the SHE10 family. As to quaternary structure, component of the mitochondria-localized RNase mitochondrial RNA-processing (RNase MRP) composed of one single RNA encoded by the NME1 gene and at least 31 proteins. Absent in the nucleus-localized RNase MRP (NuMRP).

The protein resides in the mitochondrion. Functionally, involved in spore wall assembly. May be a component of the mitochondrial RNase MRP (MtMRP), a ribonucleoprotein endoribonuclease involved in the cleaving RNA transcripts to generate primers for DNA replication in mitochondria. In Saccharomyces cerevisiae (strain JAY291) (Baker's yeast), this protein is Outer spore wall assembly protein SHE10.